Reading from the N-terminus, the 3289-residue chain is tRNA nuclease CdiA (3289 aa).

The N-terminal stretch at 1-32 is a signal peptide; it reads MHQPPVRFTYRLLSYLISTIIAGQPLLPAVGA. A two-partner system transport domain (TPS) region spans residues 36–322; it reads PQNGAGMDKA…AGGNLSVSSR (287 aa). The segment at 351-1398 is FHA-1; it reads EKLTAGRDVT…IVVRTGHLLN (1048 aa). The disordered stretch occupies residues 595 to 615; sequence AVNASEKLTHSGKSSAPSLSL. A receptor binding domain (RBD) region spans residues 1399–1689; the sequence is QREGFSATTT…LTGQTGISDD (291 aa). The interval 1690 to 1874 is YP domain; sequence WPLPSGNNGY…LSPEDITLHN (185 aa). Positions 1875–1935 are periplasmic FHA-1 repeat (pFR); sequence GSVISGNNVQ…DLSAIGDISN (61 aa). The segment at 1979 to 2653 is FHA-2; that stretch reads TDTGPVATIK…TSKYDSKQTS (675 aa). The segment covering 2097 to 2113 has biased composition (basic and acidic residues); sequence RESKNSRNGRSESHESH. 3 disordered regions span residues 2097–2116, 2332–2356, and 2466–2513; these read RESK…HAAV, GSSK…TIGS, and TGDP…TGKN. 2 stretches are compositionally biased toward polar residues: residues 2344–2356 and 2472–2507; these read GTTQ…TIGS and TGVS…NLSV. The tract at residues 2992–3034 is pretoxin (PT) domain; sequence SDLSEEQKQTISTLATVSAGLAGGLTGNSTASAAVGAQSGKNA. Residues 3035–3038 carry the VENN CT cleavage motif motif; sequence VENN. Positions 3035–3289 are C-terminal effector domain (CT); has tRNase activity; sequence VENNYLSVSE…VGHIQPVKVK (255 aa). Positions 3039–3197 are inner membrane translocation domain (IMTD), targets protein to PtsG; it reads YLSVSEKTEL…PLIGQAASNK (159 aa).

The protein in the N-terminal section; belongs to the CdiA toxin family. In terms of assembly, forms a contact-dependent growth inhibition complex of CdiA-CT-NC101, CdiI-NC101 and EF-Tu; the complex is a dimer of heterotrimers. Stable CdiA-CT-NC101, EF-Tu complexes are not detected, nor are complexes with EF-Ts.

It localises to the secreted. The protein resides in the target cell. Its subcellular location is the target cell cytoplasm. Toxic component of a toxin-immunity protein module, which functions as a cellular contact-dependent growth inhibition (CDI) system. CDI modules allow bacteria to communicate with and inhibit the growth of closely related neighboring bacteria in a contact-dependent fashion (target cell counts decrease about 10,0000-fold for this system). CdiA toxicity is neutralized by its cognate immunity protein CdiI-NC101, but not by CdiI from other bacteria. The C-terminal domain (CT) cleaves tRNA endonucleolytically at the 5' side of guanine discriminator nucleotide sites (removes the last 4 nucleotides of the tRNA acceptor arm when the first nucleotide to be removed is G). Requires EF-Ts (tsf) for toxic function of the CT domain in vivo. In vitro the CT tRNase activity requires both EF-Tu (tufA) and EF-Ts. EF-Ts probably increases steady-state GTP-EF-Tu-aa-tRNA substrate levels. The CT domain is thought to remodel this same complex to displace the 3'-end of the aa-tRNA and allow it to enter into the toxin active site. The CT domain gains access to the cytoplasm of target cells by using integral inner membrane protein PTS system glucose-specific EIICB component (ptsG). Functionally, the CdiA protein is thought to be exported from the cell through the central lumen of CdiB, the other half of its two-partner system (TPS). The TPS domain probably remains associated with CdiB while the FHA-1 domain forms an extended filament with the receptor-binding domain (RBD) at its extremity; in the secretion arrested state the C-terminus of the RBD and YP domains form a hairpin-like structure as the FHA-2, PT and CT domains are periplasmic. The YP domain is probably responsible for this arrest at the point where it re-enters the host cell periplasm. Upon binding to a target cell outer membrane receptor a signal is transmitted to activate secretion. The filament elongates slightly, the rest of CdiA is secreted and the FHA-2 domain becomes stably associated with the target cell's outer membrane where it facilitates entry of the toxic CT domain into the target cell periplasm. From there the toxic CT domain is cleaved and gains access to the target cell cytoplasm via an inner membrane protein (PtsG for this CDI). The sequence is that of tRNA nuclease CdiA from Escherichia coli (strain NC101).